Reading from the N-terminus, the 541-residue chain is Chaperonin GroEL (541 aa).

ATP-binding positions include 29-32 (TAGP), Lys-50, 86-90 (DGTTT), Gly-416, and Asp-498.

It belongs to the chaperonin (HSP60) family. In terms of assembly, forms a cylinder of 14 subunits composed of two heptameric rings stacked back-to-back. Interacts with the co-chaperonin GroES.

The protein localises to the cytoplasm. The enzyme catalyses ATP + H2O + a folded polypeptide = ADP + phosphate + an unfolded polypeptide.. Functionally, together with its co-chaperonin GroES, plays an essential role in assisting protein folding. The GroEL-GroES system forms a nano-cage that allows encapsulation of the non-native substrate proteins and provides a physical environment optimized to promote and accelerate protein folding. The sequence is that of Chaperonin GroEL from Anaplasma phagocytophilum (Ehrlichia phagocytophila).